A 173-amino-acid polypeptide reads, in one-letter code: Dual-action ribosomal maturation protein DarP (173 aa).

It belongs to the DarP family.

It localises to the cytoplasm. Its function is as follows. Member of a network of 50S ribosomal subunit biogenesis factors which assembles along the 30S-50S interface, preventing incorrect 23S rRNA structures from forming. Promotes peptidyl transferase center (PTC) maturation. This Pseudomonas fluorescens (strain ATCC BAA-477 / NRRL B-23932 / Pf-5) protein is Dual-action ribosomal maturation protein DarP.